Here is an 83-residue protein sequence, read N- to C-terminus: DNA-directed RNA polymerase subunit Rpo5 (83 aa).

Belongs to the archaeal Rpo5/eukaryotic RPB5 RNA polymerase subunit family. As to quaternary structure, part of the RNA polymerase complex.

The protein resides in the cytoplasm. It catalyses the reaction RNA(n) + a ribonucleoside 5'-triphosphate = RNA(n+1) + diphosphate. Its function is as follows. DNA-dependent RNA polymerase (RNAP) catalyzes the transcription of DNA into RNA using the four ribonucleoside triphosphates as substrates. In Metallosphaera sedula (strain ATCC 51363 / DSM 5348 / JCM 9185 / NBRC 15509 / TH2), this protein is DNA-directed RNA polymerase subunit Rpo5.